Here is a 205-residue protein sequence, read N- to C-terminus: Ribosomal RNA small subunit methyltransferase G (205 aa).

S-adenosyl-L-methionine-binding positions include G76, L81, 127 to 128, and R140; that span reads IE.

Belongs to the methyltransferase superfamily. RNA methyltransferase RsmG family.

The protein localises to the cytoplasm. It carries out the reaction guanosine(527) in 16S rRNA + S-adenosyl-L-methionine = N(7)-methylguanosine(527) in 16S rRNA + S-adenosyl-L-homocysteine. Its function is as follows. Specifically methylates the N7 position of guanine in position 527 of 16S rRNA. The polypeptide is Ribosomal RNA small subunit methyltransferase G (Francisella tularensis subsp. novicida (strain U112)).